Here is a 91-residue protein sequence, read N- to C-terminus: Small ribosomal subunit protein uS19 (91 aa).

Belongs to the universal ribosomal protein uS19 family.

Protein S19 forms a complex with S13 that binds strongly to the 16S ribosomal RNA. The sequence is that of Small ribosomal subunit protein uS19 from Dechloromonas aromatica (strain RCB).